The primary structure comprises 304 residues: MRWYEISIKTTEEAEDAISNILYELGANGVVIEDNEIVTRPNLWDYIDENQFTKKDYARVCAYFPESSNILELTHTIEERLKETAKYIDIGEGKISVSEVNEKDWAEEWKKYYKPVEIGNIVIVPSWEDYKAEGNKTIVKLDPGMAFGTGTHESTILCLEAIQKYVKPGMDVLDVGTGSGILAIAAKKFLARRVLAVDIDEVAVKVAEENARLNGVEIEIKKNDLVEGIEEKFDVVVANIVADIIMRLSRDVKKVLKDDRIFISSGIIEDRLEDVLKSFEKNSLEIVEVKKLGTWCLVVSKKTV.

The S-adenosyl-L-methionine site is built by T155, G176, D198, and N239.

This sequence belongs to the methyltransferase superfamily. PrmA family.

It is found in the cytoplasm. It carries out the reaction L-lysyl-[protein] + 3 S-adenosyl-L-methionine = N(6),N(6),N(6)-trimethyl-L-lysyl-[protein] + 3 S-adenosyl-L-homocysteine + 3 H(+). Its function is as follows. Methylates ribosomal protein L11. This Caldicellulosiruptor bescii (strain ATCC BAA-1888 / DSM 6725 / KCTC 15123 / Z-1320) (Anaerocellum thermophilum) protein is Ribosomal protein L11 methyltransferase.